A 370-amino-acid polypeptide reads, in one-letter code: DNA replication and repair protein RecF (370 aa).

30-37 (GENAQGKT) serves as a coordination point for ATP.

It belongs to the RecF family.

It is found in the cytoplasm. In terms of biological role, the RecF protein is involved in DNA metabolism; it is required for DNA replication and normal SOS inducibility. RecF binds preferentially to single-stranded, linear DNA. It also seems to bind ATP. The polypeptide is DNA replication and repair protein RecF (Bacillus pumilus (strain SAFR-032)).